Consider the following 316-residue polypeptide: Phospholipase A1 2 (316 aa).

The first 4 residues, 1-4, serve as a signal peptide directing secretion; it reads ADDL. A propeptide spanning residues 5–14 is cleaved from the precursor; it reads TTLRNGTLDR. Cysteine 20 and cysteine 103 are oxidised to a cystine. Serine 153 serves as the catalytic Nucleophile. The active-site Charge relay system is aspartate 181. Cystine bridges form between cysteine 192/cysteine 197 and cysteine 235/cysteine 240. The active-site Charge relay system is histidine 242. 3 disulfide bridges follow: cysteine 257–cysteine 284, cysteine 258–cysteine 309, and cysteine 277–cysteine 282.

It belongs to the AB hydrolase superfamily. Lipase family. As to expression, expressed by the venom gland.

The protein resides in the secreted. The catalysed reaction is a 1,2-diacyl-sn-glycero-3-phosphocholine + H2O = a 2-acyl-sn-glycero-3-phosphocholine + a fatty acid + H(+). Functionally, catalyzes the hydrolysis of phosphatidylcholine with phospholipase A1 activity. May act as an allergen and induce hemolytic activity. The protein is Phospholipase A1 2 of Polistes dominula (European paper wasp).